The following is a 62-amino-acid chain: Amolopin-P2 (62 aa).

Residues 1–22 (MFTLKKSLLLLFFLGTISLSLC) form the signal peptide. The propeptide occupies 23–44 (EQERGADEEENGGEVTEQEVKR).

The protein belongs to the frog skin active peptide (FSAP) family. Amolopin subfamily. As to expression, expressed by the skin glands.

The protein localises to the secreted. Functionally, antimicrobial peptide with activity against Gram-positive bacteria. Has been tested against S.aureus (MIC=37.5 ug/mL), against B.pumilus (MIC=75.0 ug/mL), B.cereus (no activity detected). Does not show activity against Gram-negative bacteria (E.coli, B.dysenteriae, A.calcoaceticus, P.aeruginosa) and fungi (C.albicans). Does not show hemolytic activity against rabbit erythrocytes. This is Amolopin-P2 from Amolops loloensis (Lolokou Sucker Frog).